The primary structure comprises 1181 residues: WD repeat-containing protein 35 (1181 aa).

WD repeat units lie at residues 12–51, 69–108, 113–152, 154–193, and 502–539; these read PNNVKLKCISWNKDQGFIACGGEDGLLKVLRLETQTDDSK, GHSGAVQVVTWNEQYQKLTTSDQNGLIIVWMLYKGSWYEE, RNKSVVRSMSWNADGQKICIVYEDGAVIVGSVDGNRIWGK, LKGIQLCHVTWSADSKILLFGMANGEIHIYDNQGNFIMKM, and GTRDPICAITASDKTLIVGRESGVIQRYSFPNVALIQK.

As to quaternary structure, component of the IFT complex A (IFT-A) complex. IFT-A complex is divided into a core subcomplex composed of IFT122:IFT140:WDR19 which is associated with TULP3 and a peripheral subcomplex composed of IFT43:WDR35:TTC21B. Interacts directy with IFT122, ITF43 and TTC21B. Interacts with IFT43. Interacts with CFAP61.

Its subcellular location is the cytoplasm. It localises to the cytoskeleton. It is found in the microtubule organizing center. The protein localises to the centrosome. The protein resides in the cilium axoneme. Its subcellular location is the cilium basal body. Its function is as follows. As a component of the IFT complex A (IFT-A), a complex required for retrograde ciliary transport and entry into cilia of G protein-coupled receptors (GPCRs), it is involved in ciliogenesis and ciliary protein trafficking. May promote CASP3 activation and TNF-stimulated apoptosis. This is WD repeat-containing protein 35 from Mus musculus (Mouse).